The chain runs to 357 residues: Red-sensitive opsin-1 (357 aa).

Over 1–49 (MAEHWGDAIYAARRKGDETTREAMFTYTNSNNTKDPFEGPNYHIAPRWV) the chain is Extracellular. Asn-31 carries N-linked (GlcNAc...) asparagine glycosylation. The chain crosses the membrane as a helical span at residues 50-74 (YNVATVWMFFVVVASTFTNGLVLVA). The Cytoplasmic portion of the chain corresponds to 75 to 86 (TAKFKKLRHPLN). The helical transmembrane segment at 87–112 (WILVNLAIADLGETLFASTISVINQF) threads the bilayer. Residues 113-126 (FGYFILGHPMCIFE) are Extracellular-facing. Cys-123 and Cys-200 form a disulfide bridge. Residues 127–146 (GYTVSVCGIAALWSLTVISW) traverse the membrane as a helical segment. Residues 147–165 (ERWVVVCKPFGNVKFDAKW) are Cytoplasmic-facing. Residues 166-189 (ASAGIIFSWVWAAAWCAPPIFGWS) traverse the membrane as a helical segment. Residues 190–215 (RYWPHGLKTSCGPDVFSGSEDPGVQS) lie on the Extracellular side of the membrane. A helical membrane pass occupies residues 216 to 243 (YMVVLMITCCIIPLAIIILCYIAVYLAI). Topologically, residues 244 to 265 (HAVAQQQKDSESTQKAEKEVSR) are cytoplasmic. The chain crosses the membrane as a helical span at residues 266–289 (MVVVMIFAYCFCWGPYTFFACFAA). The Extracellular portion of the chain corresponds to 290–297 (ANPGYAFH). The helical transmembrane segment at 298-322 (PLAAAMPAYFAKSATIYNPVIYVFM) threads the bilayer. Lys-309 is modified (N6-(retinylidene)lysine). The Cytoplasmic segment spans residues 323 to 357 (NRQFRVCIMQLFGKKVDDGSEVSTSKTEVSSVAPA).

This sequence belongs to the G-protein coupled receptor 1 family. Opsin subfamily. Post-translationally, phosphorylated on some or all of the serine and threonine residues present in the C-terminal region. In terms of tissue distribution, retinal double cone principal photoreceptor cell outer segments.

Its subcellular location is the membrane. Functionally, visual pigments are the light-absorbing molecules that mediate vision. They consist of an apoprotein, opsin, covalently linked to cis-retinal. This Danio rerio (Zebrafish) protein is Red-sensitive opsin-1 (opn1lw1).